The chain runs to 122 residues: Large ribosomal subunit protein uL14c (122 aa).

The protein belongs to the universal ribosomal protein uL14 family. As to quaternary structure, part of the 50S ribosomal subunit.

It localises to the plastid. The protein localises to the chloroplast. Functionally, binds to 23S rRNA. The protein is Large ribosomal subunit protein uL14c of Platanus occidentalis (Sycamore).